The sequence spans 241 residues: MTFTLYPAIDLKDGACVRLLRGEMDAATVFNTDPADQARAFHAMGFTHLHVVDLNGAFAGAPVNRAAVEGILKATPAPVQLGGGIRTRAQIDAWLEAGISRVILGTIALRDPELVKTAARALPGRIVVGIDAKDGMVAVEGWAETSDMKATELAKAFEGCGVAAIVATDIGRDGLKTGVNVPFTAELAHAVSIPVIASGGVRDVNDIRALKASGAPIAGSILGRALYDGDIVASEAIEAAG.

The active-site Proton acceptor is D10. The active-site Proton donor is D131.

The protein belongs to the HisA/HisF family.

Its subcellular location is the cytoplasm. The catalysed reaction is 1-(5-phospho-beta-D-ribosyl)-5-[(5-phospho-beta-D-ribosylamino)methylideneamino]imidazole-4-carboxamide = 5-[(5-phospho-1-deoxy-D-ribulos-1-ylimino)methylamino]-1-(5-phospho-beta-D-ribosyl)imidazole-4-carboxamide. It functions in the pathway amino-acid biosynthesis; L-histidine biosynthesis; L-histidine from 5-phospho-alpha-D-ribose 1-diphosphate: step 4/9. The polypeptide is 1-(5-phosphoribosyl)-5-[(5-phosphoribosylamino)methylideneamino] imidazole-4-carboxamide isomerase (Hyphomonas neptunium (strain ATCC 15444)).